Reading from the N-terminus, the 123-residue chain is Large ribosomal subunit protein uL14 (123 aa).

This sequence belongs to the universal ribosomal protein uL14 family. As to quaternary structure, part of the 50S ribosomal subunit. Forms a cluster with proteins L3 and L19. In the 70S ribosome, L14 and L19 interact and together make contacts with the 16S rRNA in bridges B5 and B8.

In terms of biological role, binds to 23S rRNA. Forms part of two intersubunit bridges in the 70S ribosome. The polypeptide is Large ribosomal subunit protein uL14 (Photorhabdus laumondii subsp. laumondii (strain DSM 15139 / CIP 105565 / TT01) (Photorhabdus luminescens subsp. laumondii)).